Here is a 185-residue protein sequence, read N- to C-terminus: dCTP deaminase (185 aa).

DCTP-binding positions include 107–112 (KSTYAR), 131–133 (TLE), glutamine 152, tyrosine 166, and glutamine 176. The active-site Proton donor/acceptor is the glutamate 133.

Belongs to the dCTP deaminase family. In terms of assembly, homotrimer.

The catalysed reaction is dCTP + H2O + H(+) = dUTP + NH4(+). The protein operates within pyrimidine metabolism; dUMP biosynthesis; dUMP from dCTP (dUTP route): step 1/2. Catalyzes the deamination of dCTP to dUTP. This chain is dCTP deaminase, found in Anaplasma phagocytophilum (strain HZ).